Reading from the N-terminus, the 126-residue chain is Holo-[acyl-carrier-protein] synthase (126 aa).

Residues D9 and E58 each coordinate Mg(2+).

It belongs to the P-Pant transferase superfamily. AcpS family. Requires Mg(2+) as cofactor.

The protein resides in the cytoplasm. It carries out the reaction apo-[ACP] + CoA = holo-[ACP] + adenosine 3',5'-bisphosphate + H(+). Transfers the 4'-phosphopantetheine moiety from coenzyme A to a Ser of acyl-carrier-protein. In Salmonella newport (strain SL254), this protein is Holo-[acyl-carrier-protein] synthase.